Here is a 542-residue protein sequence, read N- to C-terminus: ATP synthase subunit alpha (542 aa).

173–180 contacts ATP; it reads GDRQTGKT. The interval 518–542 is disordered; sequence PLVEKKPDEKHTTPVEQEKIVAGEK. Basic and acidic residues predominate over residues 519 to 542; that stretch reads LVEKKPDEKHTTPVEQEKIVAGEK.

Belongs to the ATPase alpha/beta chains family. F-type ATPases have 2 components, CF(1) - the catalytic core - and CF(0) - the membrane proton channel. CF(1) has five subunits: alpha(3), beta(3), gamma(1), delta(1), epsilon(1). CF(0) has three main subunits: a(1), b(2) and c(9-12). The alpha and beta chains form an alternating ring which encloses part of the gamma chain. CF(1) is attached to CF(0) by a central stalk formed by the gamma and epsilon chains, while a peripheral stalk is formed by the delta and b chains.

Its subcellular location is the cell membrane. The enzyme catalyses ATP + H2O + 4 H(+)(in) = ADP + phosphate + 5 H(+)(out). Functionally, produces ATP from ADP in the presence of a proton gradient across the membrane. The alpha chain is a regulatory subunit. This is ATP synthase subunit alpha from Bifidobacterium adolescentis (strain ATCC 15703 / DSM 20083 / NCTC 11814 / E194a).